A 347-amino-acid chain; its full sequence is Fructose-1,6-bisphosphatase class 1 2 (347 aa).

Mg(2+)-binding residues include E92, D111, L113, and D114. Residues 114-117 and N202 contribute to the substrate site; that span reads DGSS. E274 is a binding site for Mg(2+).

Belongs to the FBPase class 1 family. Homotetramer. The cofactor is Mg(2+).

It is found in the cytoplasm. The catalysed reaction is beta-D-fructose 1,6-bisphosphate + H2O = beta-D-fructose 6-phosphate + phosphate. It functions in the pathway carbohydrate biosynthesis; Calvin cycle. In Bradyrhizobium sp. (strain BTAi1 / ATCC BAA-1182), this protein is Fructose-1,6-bisphosphatase class 1 2.